The following is an 86-amino-acid chain: Small nuclear ribonucleoprotein F (86 aa).

A Sm domain is found at N14–N86.

Belongs to the snRNP Sm proteins family. SmF/LSm6 subfamily. In terms of assembly, component of the Sm core complex, present in spliceosomal snRNP U1, U2, U4/U6 and U5. The core complex contains SMB1, SMD1, SMD2, SMD3, SME1, SMX3 and SMX2 (Sm proteins B, D1, D2, D3, E, F and G, respectively), and is probably a heptameric ring structure. SMX3 specifically interacts with SME1. Belongs to the CWC complex (or CEF1-associated complex), a spliceosome sub-complex reminiscent of a late-stage spliceosome composed of the U2, U5 and U6 snRNAs and at least BUD13, BUD31, BRR2, CDC40, CEF1, CLF1, CUS1, CWC2, CWC15, CWC21, CWC22, CWC23, CWC24, CWC25, CWC27, ECM2, HSH155, IST3, ISY1, LEA1, MSL1, NTC20, PRP8, PRP9, PRP11, PRP19, PRP21, PRP22, PRP45, PRP46, SLU7, SMB1, SMD1, SMD2, SMD3, SMX2, SMX3, SNT309, SNU114, SPP2, SYF1, SYF2, RSE1 and YJU2. Component of the U4/U6-U5 tri-snRNP complex composed of the U4, U6 and U5 snRNAs and at least PRP3, PRP4, PRP6, PRP8, PRP18, PRP31, PRP38, SNU13, SNU23, SNU66, SNU114, SPP381, SMB1, SMD1, SMD2, SMD3, SMX2, SMX3, LSM2, LSM3, LSM4, LSM5, LSM6, LSM7, LSM8, BRR2 and DIB1.

Its subcellular location is the nucleus. The protein localises to the cytoplasm. Its function is as follows. Plays a role in pre-mRNA splicing as a core component of the spliceosomal U1, U2, U4 and U5 small nuclear ribonucleoproteins (snRNPs), the building blocks of the spliceosome. The protein is Small nuclear ribonucleoprotein F (SMX3) of Saccharomyces cerevisiae (strain ATCC 204508 / S288c) (Baker's yeast).